A 250-amino-acid chain; its full sequence is Non-specific acid phosphatase (250 aa).

A signal peptide spans 1–20; that stretch reads MKSRYLLFFLPLIVAKYTSA.

The protein belongs to the class A bacterial acid phosphatase family. In terms of assembly, homodimer.

The protein localises to the periplasm. It catalyses the reaction a phosphate monoester + H2O = an alcohol + phosphate. The sequence is that of Non-specific acid phosphatase (phoN) from Salmonella typhi.